The following is a 647-amino-acid chain: Threonine--tRNA ligase (647 aa).

A TGS domain is found at 1–63 (MDKINITFPD…EEDGSIEIVT (63 aa)). The segment at 242-540 (DHRKIGKELD…LTEETKGAFP (299 aa)) is catalytic. Residues cysteine 336, histidine 387, and histidine 517 each contribute to the Zn(2+) site.

The protein belongs to the class-II aminoacyl-tRNA synthetase family. As to quaternary structure, homodimer. It depends on Zn(2+) as a cofactor.

It is found in the cytoplasm. The enzyme catalyses tRNA(Thr) + L-threonine + ATP = L-threonyl-tRNA(Thr) + AMP + diphosphate + H(+). In terms of biological role, catalyzes the attachment of threonine to tRNA(Thr) in a two-step reaction: L-threonine is first activated by ATP to form Thr-AMP and then transferred to the acceptor end of tRNA(Thr). Also edits incorrectly charged L-seryl-tRNA(Thr). In Staphylococcus carnosus (strain TM300), this protein is Threonine--tRNA ligase.